The chain runs to 248 residues: Glutathione S-transferase omega-2 (248 aa).

The GST N-terminal domain maps to 22-101 (GVIRIYSMRF…YLDDVFPGRK (80 aa)). Cys-32 serves as the catalytic Nucleophile. Residues Lys-59, Val-72, and 85 to 86 (ES) contribute to the glutathione site. In terms of domain architecture, GST C-terminal spans 106 to 231 (DPYERARQKM…IFLGFLNLYF (126 aa)).

Belongs to the GST superfamily. Omega family.

The enzyme catalyses RX + glutathione = an S-substituted glutathione + a halide anion + H(+). It catalyses the reaction L-dehydroascorbate + 2 glutathione = glutathione disulfide + L-ascorbate. The catalysed reaction is methylarsonate + 2 glutathione + H(+) = methylarsonous acid + glutathione disulfide + H2O. Its function is as follows. Exhibits glutathione-dependent thiol transferase activity. Has high dehydroascorbate reductase activity and may contribute to the recycling of ascorbic acid. Participates in the biotransformation of inorganic arsenic and reduces monomethylarsonic acid (MMA). This is Glutathione S-transferase omega-2 (Gsto2) from Rattus norvegicus (Rat).